Reading from the N-terminus, the 316-residue chain is Nod factor export ATP-binding protein I (316 aa).

Positions 18–248 constitute an ABC transporter domain; that stretch reads IDFSDVSKTY…LIGCEVIEIY (231 aa). 50 to 57 is an ATP binding site; sequence GPNGAGKS.

It belongs to the ABC transporter superfamily. Lipooligosaccharide exporter (TC 3.A.1.102) family. In terms of assembly, the complex is composed of two ATP-binding proteins (NodI) and two transmembrane proteins (NodJ).

Its subcellular location is the cell inner membrane. Part of the ABC transporter complex NodIJ involved in the export of the nodulation factors (Nod factors), the bacterial signal molecules that induce symbiosis and subsequent nodulation induction. Nod factors are LCO (lipo-chitin oligosaccharide), a modified beta-1,4-linked N-acetylglucosamine oligosaccharide. This subunit is responsible for energy coupling to the transport system. The sequence is that of Nod factor export ATP-binding protein I from Rhizobium etli (strain ATCC 51251 / DSM 11541 / JCM 21823 / NBRC 15573 / CFN 42).